A 415-amino-acid polypeptide reads, in one-letter code: Tyrosine--tRNA ligase (415 aa).

Y40 contacts L-tyrosine. A 'HIGH' region motif is present at residues 45–54; sequence ATAKSLHVGS. Residues Y178 and Q182 each coordinate L-tyrosine. The short motif at 238–242 is the 'KMSKS' region element; it reads KMGKS. K241 is an ATP binding site. The region spanning 350–414 is the S4 RNA-binding domain; that stretch reads ASIVQLIVKT…GKKRHALVQL (65 aa).

The protein belongs to the class-I aminoacyl-tRNA synthetase family. TyrS type 1 subfamily. In terms of assembly, homodimer.

The protein localises to the cytoplasm. It catalyses the reaction tRNA(Tyr) + L-tyrosine + ATP = L-tyrosyl-tRNA(Tyr) + AMP + diphosphate + H(+). In terms of biological role, catalyzes the attachment of tyrosine to tRNA(Tyr) in a two-step reaction: tyrosine is first activated by ATP to form Tyr-AMP and then transferred to the acceptor end of tRNA(Tyr). In Ruegeria pomeroyi (strain ATCC 700808 / DSM 15171 / DSS-3) (Silicibacter pomeroyi), this protein is Tyrosine--tRNA ligase.